Consider the following 359-residue polypeptide: Peptide chain release factor 1 (359 aa).

N5-methylglutamine is present on Gln235.

It belongs to the prokaryotic/mitochondrial release factor family. In terms of processing, methylated by PrmC. Methylation increases the termination efficiency of RF1.

The protein localises to the cytoplasm. In terms of biological role, peptide chain release factor 1 directs the termination of translation in response to the peptide chain termination codons UAG and UAA. This Ehrlichia ruminantium (strain Gardel) protein is Peptide chain release factor 1.